Reading from the N-terminus, the 343-residue chain is Heat-inducible transcription repressor HrcA (343 aa).

It belongs to the HrcA family.

In terms of biological role, negative regulator of class I heat shock genes (grpE-dnaK-dnaJ and groELS operons). Prevents heat-shock induction of these operons. This chain is Heat-inducible transcription repressor HrcA, found in Mycolicibacterium gilvum (strain PYR-GCK) (Mycobacterium gilvum (strain PYR-GCK)).